The following is a 433-amino-acid chain: E3 ubiquitin-protein ligase RNF26 (433 aa).

A run of 5 helical transmembrane segments spans residues 24-44, 60-80, 147-169, 183-203, and 220-240; these read LNFLLVSSLLASLAWLLAFVY, GVLLSLLALIEAVVRFTCGGL, VINSLVNICLIGTQNLFSLVLAL, VVAAFLAHISSSAVAMAILLW, and LASFVLVNLTGLVLLACVLAV. Residues 380–422 form an RING-type zinc finger; it reads CVICQDQSKTVLLLPCRHLCLCQACTEILMRHPVYHRNCPLCR.

As to quaternary structure, interacts with INCA1. Interacts with TMEM43, ENDOD1, TMEM33 and TMED1 to form a complex capable of modulating innate immune signaling through the cGAS-STING pathway. Interacts with UBE2J1; this interaction is important for SQSTM1 ubiquitination. Ubiquitous. Up-regulated in several cancer cell lines.

It localises to the endoplasmic reticulum membrane. The catalysed reaction is S-ubiquitinyl-[E2 ubiquitin-conjugating enzyme]-L-cysteine + [acceptor protein]-L-lysine = [E2 ubiquitin-conjugating enzyme]-L-cysteine + N(6)-ubiquitinyl-[acceptor protein]-L-lysine.. It functions in the pathway protein modification; protein ubiquitination. Functionally, E3 ubiquitin-protein ligase that plays a key role in endosome organization by retaining vesicles in the perinuclear cloud. Acts as a platform for perinuclear positioning of the endosomal system by mediating ubiquitination of SQSTM1 through interaction with the ubiquitin conjugating enzyme UBE2J1. Ubiquitinated SQSTM1 attracts specific vesicle-associated adapters, forming a molecular bridge that restrains cognate vesicles in the perinuclear region and organizes the endosomal pathway for efficient cargo transport. Also acts as a regulator of type I interferon production in response to viral infection by mediating the formation of 'Lys-11'-linked polyubiquitin chains on TMEM173/STING, leading to stabilize TMEM173/STING. Also required to limit type I interferon response by promoting autophagic degradation of IRF3. This is E3 ubiquitin-protein ligase RNF26 from Homo sapiens (Human).